We begin with the raw amino-acid sequence, 101 residues long: MAKIADPRDIILAPVVSEKSYGLMEQNTYAFFVAPTANKTEIKIAIEQIFGVKVDSVNTANRAGKRKRSRTGYGVRKATKRAYVTLREGSDAIDIFGGNAA.

It belongs to the universal ribosomal protein uL23 family. As to quaternary structure, part of the 50S ribosomal subunit. Contacts protein L29, and trigger factor when it is bound to the ribosome.

In terms of biological role, one of the early assembly proteins it binds 23S rRNA. One of the proteins that surrounds the polypeptide exit tunnel on the outside of the ribosome. Forms the main docking site for trigger factor binding to the ribosome. The polypeptide is Large ribosomal subunit protein uL23 (Corynebacterium diphtheriae (strain ATCC 700971 / NCTC 13129 / Biotype gravis)).